The following is a 407-amino-acid chain: Imidazolonepropionase (407 aa).

Fe(3+) is bound by residues H72 and H74. Residues H72 and H74 each contribute to the Zn(2+) site. Residues R81, Y144, and H177 each coordinate 4-imidazolone-5-propanoate. Y144 contacts N-formimidoyl-L-glutamate. H242 is a Fe(3+) binding site. H242 contributes to the Zn(2+) binding site. Q245 is a binding site for 4-imidazolone-5-propanoate. D317 is a binding site for Fe(3+). D317 is a Zn(2+) binding site. N-formimidoyl-L-glutamate contacts are provided by N319 and G321. T322 lines the 4-imidazolone-5-propanoate pocket.

Belongs to the metallo-dependent hydrolases superfamily. HutI family. It depends on Zn(2+) as a cofactor. Fe(3+) serves as cofactor.

The protein localises to the cytoplasm. It catalyses the reaction 4-imidazolone-5-propanoate + H2O = N-formimidoyl-L-glutamate. Its pathway is amino-acid degradation; L-histidine degradation into L-glutamate; N-formimidoyl-L-glutamate from L-histidine: step 3/3. In terms of biological role, catalyzes the hydrolytic cleavage of the carbon-nitrogen bond in imidazolone-5-propanoate to yield N-formimidoyl-L-glutamate. It is the third step in the universal histidine degradation pathway. The protein is Imidazolonepropionase of Rhizobium rhizogenes (Agrobacterium rhizogenes).